A 385-amino-acid chain; its full sequence is Homoserine O-succinyltransferase (385 aa).

The region spanning 51 to 359 is the AB hydrolase-1 domain; sequence NAILICHALS…EATEGHDAFL (309 aa). The active-site Nucleophile is Ser157. Arg227 provides a ligand contact to substrate. Active-site residues include Asp322 and His355. Asp356 serves as a coordination point for substrate.

It belongs to the AB hydrolase superfamily. MetX family. As to quaternary structure, homodimer.

It is found in the cytoplasm. It catalyses the reaction L-homoserine + succinyl-CoA = O-succinyl-L-homoserine + CoA. It participates in amino-acid biosynthesis; L-methionine biosynthesis via de novo pathway; O-succinyl-L-homoserine from L-homoserine: step 1/1. In terms of biological role, transfers a succinyl group from succinyl-CoA to L-homoserine, forming succinyl-L-homoserine. The polypeptide is Homoserine O-succinyltransferase (Marinomonas sp. (strain MWYL1)).